A 465-amino-acid chain; its full sequence is Probable Xaa-Pro aminopeptidase pepP (465 aa).

Aspartate 261, aspartate 272, glutamate 395, and glutamate 435 together coordinate Mn(2+).

This sequence belongs to the peptidase M24B family. The cofactor is Mn(2+).

It carries out the reaction Release of any N-terminal amino acid, including proline, that is linked to proline, even from a dipeptide or tripeptide.. Functionally, catalyzes the removal of a penultimate prolyl residue from the N-termini of peptides. The chain is Probable Xaa-Pro aminopeptidase pepP (pepP) from Talaromyces marneffei (strain ATCC 18224 / CBS 334.59 / QM 7333) (Penicillium marneffei).